We begin with the raw amino-acid sequence, 458 residues long: Sensor histidine kinase ZraS (458 aa).

Residues 1 to 14 lie on the Cytoplasmic side of the membrane; it reads MRFMQRSKDSLAKW. A helical membrane pass occupies residues 15–35; the sequence is LSAILPVVIVGLVGLFAVTVI. Residues 36–194 are Periplasmic-facing; the sequence is RDYGRETAAA…SAEDREQRNT (159 aa). A helical transmembrane segment spans residues 195 to 215; the sequence is LIILFALATVLLASVLSFFWY. Topologically, residues 216–458 are cytoplasmic; it reads RRYLRSRQLL…VNITRKDPQG (243 aa). Residues 244 to 451 enclose the Histidine kinase domain; sequence GVAHEIRNPL…RFTLWLPVNI (208 aa). Position 247 is a phosphohistidine; by autocatalysis (His-247).

Post-translationally, autophosphorylated.

Its subcellular location is the cell inner membrane. It catalyses the reaction ATP + protein L-histidine = ADP + protein N-phospho-L-histidine.. Activity of the ZraS/ZraR two-component system is repressed by the zinc-bound form of ZraP, which probably interacts with the periplasmic region of ZraS. Its function is as follows. Part of the Zra signaling pathway, an envelope stress response (ESR) system composed of the periplasmic accessory protein ZraP, the histidine kinase ZraS and the transcriptional regulator ZraR. The ZraPSR system contributes to antibiotic resistance and is important for membrane integrity in the presence of membrane-targeting biocides. ZraS is a member of the two-component regulatory system ZraS/ZraR. Functions as a membrane-associated sensor kinase that phosphorylates ZraR in response to high concentrations of Zn(2+) or Pb(2+) in the medium. The chain is Sensor histidine kinase ZraS (zraS) from Escherichia coli O157:H7.